Here is a 205-residue protein sequence, read N- to C-terminus: Small ribosomal subunit protein uS4 (205 aa).

Residues 1-16 are compositionally biased toward basic and acidic residues; sequence MSKRESSKYKIDRRMG. Residues 1 to 46 are disordered; that stretch reads MSKRESSKYKIDRRMGENIWGRPKSPVNRREYGPGQHGQRRKGKLS. The 64-residue stretch at 94 to 157 folds into the S4 RNA-binding domain; it reads SRLDAIVYRA…KQLVIVLEAV (64 aa).

This sequence belongs to the universal ribosomal protein uS4 family. In terms of assembly, part of the 30S ribosomal subunit. Contacts protein S5. The interaction surface between S4 and S5 is involved in control of translational fidelity.

Functionally, one of the primary rRNA binding proteins, it binds directly to 16S rRNA where it nucleates assembly of the body of the 30S subunit. Its function is as follows. With S5 and S12 plays an important role in translational accuracy. This Rhizobium leguminosarum bv. trifolii (strain WSM2304) protein is Small ribosomal subunit protein uS4.